We begin with the raw amino-acid sequence, 143 residues long: Small ribosomal subunit protein eS12 (143 aa).

Glycyl lysine isopeptide (Lys-Gly) (interchain with G-Cter in ubiquitin) cross-links involve residues lysine 85, lysine 95, and lysine 114.

The protein belongs to the eukaryotic ribosomal protein eS12 family. Component of the small ribosomal subunit (SSU). Mature yeast ribosomes consist of a small (40S) and a large (60S) subunit. The 40S small subunit contains 1 molecule of ribosomal RNA (18S rRNA) and 33 different proteins (encoded by 57 genes). The large 60S subunit contains 3 rRNA molecules (25S, 5.8S and 5S rRNA) and 46 different proteins (encoded by 81 genes).

It localises to the cytoplasm. Functionally, component of the ribosome, a large ribonucleoprotein complex responsible for the synthesis of proteins in the cell. The small ribosomal subunit (SSU) binds messenger RNAs (mRNAs) and translates the encoded message by selecting cognate aminoacyl-transfer RNA (tRNA) molecules. The large subunit (LSU) contains the ribosomal catalytic site termed the peptidyl transferase center (PTC), which catalyzes the formation of peptide bonds, thereby polymerizing the amino acids delivered by tRNAs into a polypeptide chain. The nascent polypeptides leave the ribosome through a tunnel in the LSU and interact with protein factors that function in enzymatic processing, targeting, and the membrane insertion of nascent chains at the exit of the ribosomal tunnel. In Saccharomyces cerevisiae (strain ATCC 204508 / S288c) (Baker's yeast), this protein is Small ribosomal subunit protein eS12.